A 303-amino-acid chain; its full sequence is N-acetylmuramic acid 6-phosphate etherase (303 aa).

A disordered region spans residues M1–I21. The SIS domain maps to A58–K221. Catalysis depends on E86, which acts as the Proton donor. E117 is a catalytic residue.

This sequence belongs to the GCKR-like family. MurNAc-6-P etherase subfamily. Homodimer.

It carries out the reaction N-acetyl-D-muramate 6-phosphate + H2O = N-acetyl-D-glucosamine 6-phosphate + (R)-lactate. It participates in amino-sugar metabolism; N-acetylmuramate degradation. Specifically catalyzes the cleavage of the D-lactyl ether substituent of MurNAc 6-phosphate, producing GlcNAc 6-phosphate and D-lactate. This chain is N-acetylmuramic acid 6-phosphate etherase, found in Bacillus pumilus (strain SAFR-032).